Here is a 1157-residue protein sequence, read N- to C-terminus: Myosin tail region-interacting protein MTI1 (1157 aa).

Positions 5 to 69 (EVPFKVVAQF…PKSFVAVQGS (65 aa)) constitute an SH3 domain. Disordered stretches follow at residues 68–116 (GSEV…GPVP) and 135–156 (TAVS…KVPM). Residues 77–89 (SSPNTGSTEQRTI) show a composition bias toward polar residues. A compositionally biased stretch (basic and acidic residues) spans 93–110 (VEQKDLPEPISPETKKET). Serine 103 bears the Phosphoserine mark. The span at 138-149 (SAQVQHDSSSGN) shows a compositional bias: polar residues. Phosphoserine is present on residues serine 158 and serine 166. Disordered stretches follow at residues 231 to 256 (PEPI…KDLP) and 284 to 888 (KKAK…PKVA). Coiled coils occupy residues 234-301 (INRA…NKNE) and 356-430 (EKEQ…GASR). 3 stretches are compositionally biased toward basic and acidic residues: residues 242–256 (GRIE…KDLP), 284–296 (KKAK…ERSA), and 312–383 (NEKT…RGEN). Residues 398–411 (EGDNDEEKEEEDSE) are compositionally biased toward acidic residues. Composition is skewed to basic and acidic residues over residues 412–423 (ENRRAALRERMA) and 506–524 (KTLD…EHGT). The span at 544-558 (DSDEDTDDHEFEDAN) shows a compositional bias: acidic residues. A Phosphoserine modification is found at serine 565. Residues 574–585 (GNNESENVNSGE) show a composition bias toward low complexity. Positions 597-606 (RTAEVSHDIE) are enriched in basic and acidic residues. A compositionally biased stretch (polar residues) spans 607-641 (NSSQNTTGNVLPVSSPQTRVARNGSINSLTKSISG). 3 positions are modified to phosphoserine: serine 621, serine 631, and serine 634. Residue threonine 636 is modified to Phosphothreonine. Phosphoserine is present on residues serine 638 and serine 647. The span at 642 to 653 (ENRRKSINEYHD) shows a compositional bias: basic and acidic residues. Residues 654–668 (TVSTNSSALTETAQD) are compositionally biased toward polar residues. Pro residues-rich tracts occupy residues 691–738 (PHPV…PVSS) and 747–765 (SIPP…PAPL). Residues 769-778 (KHNEVEEHVK) show a composition bias toward basic and acidic residues. Pro residues predominate over residues 795–808 (NTAPPLPRAPPVPP). Residues 832 to 853 (QNVTASTPSMMSTQQRVPTSVL) are compositionally biased toward polar residues. Phosphothreonine is present on threonine 850. Serine 889 is modified (phosphoserine). A phosphothreonine mark is found at threonine 894 and threonine 895. Residue lysine 1012 forms a Glycyl lysine isopeptide (Lys-Gly) (interchain with G-Cter in ubiquitin) linkage.

In terms of assembly, binds to the SH3 domains of the type I myosins MYO3 and MYO5.

The protein localises to the cytoplasm. It localises to the cytoskeleton. Its subcellular location is the actin patch. Its function is as follows. Involved in the regulation of actin cytoskeleton. This chain is Myosin tail region-interacting protein MTI1 (BBC1), found in Saccharomyces cerevisiae (strain ATCC 204508 / S288c) (Baker's yeast).